The primary structure comprises 707 residues: Choline transporter-like protein 4 (707 aa).

At 1–27 the chain is on the cytoplasmic side; that stretch reads MASEEYGEPAKHDPSFKGPIKKRGCTD. Residues 28–48 traverse the membrane as a helical segment; that stretch reads IICCVLFMVFLLGYMVVGILA. At 49–225 the chain is on the extracellular side; it reads WLYGDPRQVI…KIFEDFAKSW (177 aa). Residues N62, N140, N176, N191, and N196 are each glycosylated (N-linked (GlcNAc...) asparagine). Residues 226-246 form a helical membrane-spanning segment; it reads PWIITALVIAMVVSLLFLILL. Residues 247–249 lie on the Cytoplasmic side of the membrane; it reads RFT. A helical membrane pass occupies residues 250–270; sequence AGILVWVLIVGVIGVIGYGIY. The Extracellular portion of the chain corresponds to 271-305; sequence HCYMEYDTLNKQGVSVSDVGFTFNLGVYFRVKETW. The helical transmembrane segment at 306-326 threads the bilayer; the sequence is LAILIVLAVVEAILLLVLLFL. The Cytoplasmic segment spans residues 327–354; it reads RKRILIAIALIKEASKAIGHIMSSLFYP. The chain crosses the membrane as a helical span at residues 355-375; the sequence is LVTFVLLVVCVAYWGMTALYL. At 376–442 the chain is on the extracellular side; the sequence is ATSGAPIYRI…TNLFNLQIYN (67 aa). N389, N397, and N401 each carry an N-linked (GlcNAc...) asparagine glycan. The helical transmembrane segment at 443–463 threads the bilayer; sequence VIGFLWCINFVIALGQCVLAG. Topologically, residues 464 to 494 are cytoplasmic; it reads AFASYYWAFHKPKDIPFFPVAESFMRTLRYH. Residues 495–515 form a helical membrane-spanning segment; that stretch reads TGSLAFGSLILTIVQLIRIIL. Residues 516–556 are Extracellular-facing; it reads EYVDHKLKGAQNPCTRFLLCCLKCCFWCLEKFIKFLNRNAY. A helical transmembrane segment spans residues 557–577; the sequence is IMIAVYGKNFCVSAKNAFKLL. The Cytoplasmic segment spans residues 578-593; it reads MRNIVRVVVLDKVTDL. The helical transmembrane segment at 594 to 614 threads the bilayer; the sequence is LIFFGKLIVVGGVGVLAFFFF. At 615–633 the chain is on the extracellular side; the sequence is SGRIPIPNDSFKSPTLNYY. A glycan (N-linked (GlcNAc...) asparagine) is linked at N622. The chain crosses the membrane as a helical span at residues 634-654; the sequence is WIPIITVVLGSYMIAHGFFSV. Over 655–707 the chain is Cytoplasmic; the sequence is YNMCVDTLFLCFLEDLERNDGSQEKPYYMSKSLMSILNKKNRPPKSEEKKKKK.

The protein belongs to the CTL (choline transporter-like) family.

The protein resides in the membrane. It is found in the apical cell membrane. The catalysed reaction is choline(out) + n H(+)(in) = choline(in) + n H(+)(out). The enzyme catalyses thiamine diphosphate(out) = thiamine diphosphate(in). Choline transporter that seems to play a role in the choline-acetylcholine system and is required to the efferent innervation of hair cells in the olivocochlear bundle for the maintenance of physiological function of outer hair cells and the protection of hair cells from acoustic injury. Also described as a thiamine pyrophosphate transporter. Its function is as follows. Also described as a thiamine pyrophosphate transporter. This Xenopus laevis (African clawed frog) protein is Choline transporter-like protein 4 (slc44a4).